We begin with the raw amino-acid sequence, 225 residues long: NAD(P)H-quinone oxidoreductase subunit K, chloroplastic (225 aa).

Cys-43, Cys-44, Cys-108, and Cys-139 together coordinate [4Fe-4S] cluster.

This sequence belongs to the complex I 20 kDa subunit family. In terms of assembly, NDH is composed of at least 16 different subunits, 5 of which are encoded in the nucleus. [4Fe-4S] cluster is required as a cofactor.

Its subcellular location is the plastid. The protein localises to the chloroplast thylakoid membrane. It carries out the reaction a plastoquinone + NADH + (n+1) H(+)(in) = a plastoquinol + NAD(+) + n H(+)(out). The enzyme catalyses a plastoquinone + NADPH + (n+1) H(+)(in) = a plastoquinol + NADP(+) + n H(+)(out). In terms of biological role, NDH shuttles electrons from NAD(P)H:plastoquinone, via FMN and iron-sulfur (Fe-S) centers, to quinones in the photosynthetic chain and possibly in a chloroplast respiratory chain. The immediate electron acceptor for the enzyme in this species is believed to be plastoquinone. Couples the redox reaction to proton translocation, and thus conserves the redox energy in a proton gradient. The sequence is that of NAD(P)H-quinone oxidoreductase subunit K, chloroplastic from Olimarabidopsis pumila (Dwarf rocket).